The following is a 389-amino-acid chain: Tyrosinase-like protein phomQ1 (389 aa).

The chain crosses the membrane as a helical span at residues Thr-53–Ser-73. Residues His-141 and His-150 each coordinate Cu cation. Asn-220 is a glycosylation site (N-linked (GlcNAc...) asparagine). Cu cation contacts are provided by His-290 and His-316.

It belongs to the tyrosinase family. Cu(2+) is required as a cofactor.

The protein resides in the membrane. Its pathway is mycotoxin biosynthesis. Its function is as follows. Tyrosinase-like protein; part of the gene cluster that mediates the biosynthesis of the phomopsins, a group of hexapeptide mycotoxins which infects lupins and causes lupinosis disease in livestock. Within the pathway, phomQ1 functions as a halogenase, converting. The pathway starts with the processing of the precursor phomA by several endopeptidases including kexin proteases as well as the cluster-specific S41 family peptidase phomP1 and the oligopeptidase phomG to produce 10 identical copies of the hexapeptide Tyr-Val-Ile-Pro-Ile-Asp. After being excised from the precursor peptide, the core peptides are cyclized and modified post-translationally by enzymes encoded within the gene cluster. The timing and order of proteolysis of the phomA precursor and PTMs are still unknown. Two tyrosinase-like enzymes, phomQ1 and phomQ2, catalyze the chlorination and hydroxylation of Tyr, respectively. PhomYb, is proposed to be involved in the construction of the macrocyclic structure. The other 4 ustYa family proteins may be involved in PTMs that generate the unique structure of phomopsin A. PhomYa is required for the hydroxylation of C-beta of Tyr. PhomYc, phomYd, and phomYe are responsible for the biosynthesis of 2,3-dehydroisoleucine (dIle), 2,3-dehydroaspartic acid (dAsp), and 3,4-dehydroproline (dPro), respectively. While dIle formation by phomYc is indispensable for the installation of dAsp by phomYd, the order of the other PTMs have not been elucidated yet. Most of the biosynthetic enzymes likely have broad substrate specificity, and thus, there might be a metabolic grid from a precursor to phomopsin A. The enzyme(s) responsible for the biosynthesis of 3,4-dehydrovaline (dVal) have also not been identified yet. Finally, phomM acts as an S-adenosylmethionine-dependent alpha-N-methyltransferase that catalyzes two successive N-methylation reactions, converting N-desmethyl-phomopsin A to phomopsin A and phomopsin A further to an N,N-dimethylated congener called phomopsin E. The protein is Tyrosinase-like protein phomQ1 of Diaporthe leptostromiformis (Lupinosis disease fungus).